Consider the following 487-residue polypeptide: Recombining binding protein suppressor of hairless (487 aa).

2 DNA-binding regions span residues 44–54 and 152–157; these read QKSYGNEKRFF and SKPSKK. K162 is subject to N6-acetyllysine. The interval 179 to 184 is DNA-binding; that stretch reads RLRSQT. Residues 342 to 432 enclose the IPT/TIG domain; that stretch reads PVVESLQLNG…YSTSLTFTYT (91 aa). The segment covering 452–468 has biased composition (polar residues); sequence SSQVPPNESNTNSEGSY. The interval 452–487 is disordered; the sequence is SSQVPPNESNTNSEGSYTNVSTNSTSVTSSTATVVS. Over residues 469–487 the composition is skewed to low complexity; it reads TNVSTNSTSVTSSTATVVS.

The protein belongs to the Su(H) family. As to quaternary structure, interacts with activated NOTCH1, NOTCH2 or NOTCH3. Interacts with MINT/SHARP. This interaction may mediate the recruitment of large corepressor complexes containing proteins such as HDAC1, HDAC2, NCOR2, SAP30, FHL1/KYOT2 and CIR1. Interacts with EP300, MAML1 and PTF1A. Interacts with RITA1, leading to nuclear export, prevent the interaction between RBPJ and NICD product and subsequent down-regulation of the Notch signaling pathway. Interacts with SNW1. Interacts with CHCHD2 and CXXC5. Interacts with BEND6 (via BEN domain). Interacts with NKAPL. Interacts with ZMIZ1. Interacts with RBM15. Interacts with L3MBTL3 and KDM1A; the interaction with KDM1A is weaker in the absence of L3MBTL3 and the interaction with L3MBTL3 is impaired by Notch-derived peptides containing the intracellular domain (NICD).

The protein localises to the nucleus. The protein resides in the cytoplasm. Functionally, transcriptional regulator that plays a central role in Notch signaling, a signaling pathway involved in cell-cell communication that regulates a broad spectrum of cell-fate determinations. Acts as a transcriptional repressor when it is not associated with Notch proteins. When associated with some NICD product of Notch proteins (Notch intracellular domain), it acts as a transcriptional activator that activates transcription of Notch target genes. Probably represses or activates transcription via the recruitment of chromatin remodeling complexes containing histone deacetylase or histone acetylase proteins, respectively. Specifically binds to the immunoglobulin kappa-type J segment recombination signal sequence. Binds specifically to methylated DNA. Binds to the oxygen responsive element of COX4I2 and activates its transcription under hypoxia conditions (4% oxygen). Negatively regulates the phagocyte oxidative burst in response to bacterial infection by repressing transcription of NADPH oxidase subunits. The polypeptide is Recombining binding protein suppressor of hairless (RBPJ) (Bos taurus (Bovine)).